A 241-amino-acid chain; its full sequence is L-aspartate dehydrogenase (241 aa).

Positions 109 and 164 each coordinate NAD(+). Residue His-193 is part of the active site.

It belongs to the L-aspartate dehydrogenase family.

It carries out the reaction L-aspartate + NADP(+) + H2O = oxaloacetate + NH4(+) + NADPH + H(+). The enzyme catalyses L-aspartate + NAD(+) + H2O = oxaloacetate + NH4(+) + NADH + H(+). It functions in the pathway cofactor biosynthesis; NAD(+) biosynthesis; iminoaspartate from L-aspartate (dehydrogenase route): step 1/1. Its function is as follows. Specifically catalyzes the NAD or NADP-dependent dehydrogenation of L-aspartate to iminoaspartate. This Thermotoga sp. (strain RQ2) protein is L-aspartate dehydrogenase.